We begin with the raw amino-acid sequence, 241 residues long: Orotidine 5'-phosphate decarboxylase (241 aa).

Substrate is bound by residues Asp15, Lys37, 64–73 (DLKYHDIPNT), Thr126, Arg187, Gln196, Gly216, and Arg217. Lys66 (proton donor) is an active-site residue.

This sequence belongs to the OMP decarboxylase family. Type 1 subfamily. Homodimer.

It carries out the reaction orotidine 5'-phosphate + H(+) = UMP + CO2. It participates in pyrimidine metabolism; UMP biosynthesis via de novo pathway; UMP from orotate: step 2/2. Its function is as follows. Catalyzes the decarboxylation of orotidine 5'-monophosphate (OMP) to uridine 5'-monophosphate (UMP). This is Orotidine 5'-phosphate decarboxylase from Trichlorobacter lovleyi (strain ATCC BAA-1151 / DSM 17278 / SZ) (Geobacter lovleyi).